Here is a 276-residue protein sequence, read N- to C-terminus: Pantothenate synthetase (276 aa).

27-34 serves as a coordination point for ATP; it reads MGALHRGH. His-34 functions as the Proton donor in the catalytic mechanism. Residue Gln-58 participates in (R)-pantoate binding. Gln-58 lines the beta-alanine pocket. An ATP-binding site is contributed by 147-150; that stretch reads GKKD. Gln-153 is a (R)-pantoate binding site. ATP contacts are provided by residues Ala-176 and 184–187; that span reads LSSR.

The protein belongs to the pantothenate synthetase family. As to quaternary structure, homodimer.

It is found in the cytoplasm. The enzyme catalyses (R)-pantoate + beta-alanine + ATP = (R)-pantothenate + AMP + diphosphate + H(+). It functions in the pathway cofactor biosynthesis; (R)-pantothenate biosynthesis; (R)-pantothenate from (R)-pantoate and beta-alanine: step 1/1. Functionally, catalyzes the condensation of pantoate with beta-alanine in an ATP-dependent reaction via a pantoyl-adenylate intermediate. This is Pantothenate synthetase from Helicobacter pylori (strain P12).